Reading from the N-terminus, the 331-residue chain is Ornithine lipid hydroxylase OlsE (331 aa).

The next 5 helical transmembrane spans lie at Val13–Phe33, Met37–Glu57, Gly85–Ala105, Trp120–Ala140, and Leu189–Leu209. The 135-residue stretch at Val126 to Thr260 folds into the Fatty acid hydroxylase domain.

This sequence belongs to the sterol desaturase family.

Its subcellular location is the cell inner membrane. The protein operates within lipid metabolism. Its function is as follows. Involved in the biosynthesis of ornithine lipids (OLs), which are phosphorus-free membrane lipids. Is responsible for the hydroxylation of OL within the ornithine moiety. This chain is Ornithine lipid hydroxylase OlsE, found in Rhizobium tropici.